The chain runs to 555 residues: Hydroxylamine reductase (555 aa).

[4Fe-4S] cluster-binding residues include cysteine 5, cysteine 8, cysteine 17, and cysteine 23. Positions 248, 272, 316, 408, 436, 461, 496, and 498 each coordinate hybrid [4Fe-2O-2S] cluster. At cysteine 408 the chain carries Cysteine persulfide.

It belongs to the HCP family. [4Fe-4S] cluster serves as cofactor. The cofactor is hybrid [4Fe-2O-2S] cluster.

The protein resides in the cytoplasm. The catalysed reaction is A + NH4(+) + H2O = hydroxylamine + AH2 + H(+). Functionally, catalyzes the reduction of hydroxylamine to form NH(3) and H(2)O. The protein is Hydroxylamine reductase of Natranaerobius thermophilus (strain ATCC BAA-1301 / DSM 18059 / JW/NM-WN-LF).